The sequence spans 535 residues: Ribonuclease Y (535 aa).

The chain crosses the membrane as a helical span at residues 4–24 (IILLIVSALIGLILGYALISI). Residues 118 to 141 (ENLSSKEKVLDSKEQSLTDKSKHI) form a disordered region. Positions 225–285 (TITSVHLPDD…IRREIARMTL (61 aa)) constitute a KH domain. Positions 351–444 (VLRHSVEVGK…VAAADALSSA (94 aa)) constitute an HD domain.

It belongs to the RNase Y family.

Its subcellular location is the cell membrane. Its function is as follows. Endoribonuclease that initiates mRNA decay. The chain is Ribonuclease Y from Streptococcus pyogenes serotype M1.